Consider the following 89-residue polypeptide: Serine-rich and transmembrane domain-containing 2 (89 aa).

Asn-11 carries N-linked (GlcNAc...) asparagine glycosylation. The chain crosses the membrane as a helical span at residues 38 to 58 (YVGLFLSLLAILLILLFTMLL).

It localises to the membrane. This chain is Serine-rich and transmembrane domain-containing 2, found in Mus musculus (Mouse).